The chain runs to 393 residues: Isocitrate dehydrogenase [NAD] subunit gamma 1, mitochondrial (393 aa).

Residues 1–39 (MALKVAIAAGSAAKAIFKPALLCRPWEVLAAHEAPRRSI) constitute a mitochondrion transit peptide. T120 contributes to the citrate binding site. S130 is subject to Phosphoserine. Position 133 (N133) interacts with citrate. Substrate is bound by residues R136 and R167. An N6-acetyllysine modification is found at K206. K226 carries the post-translational modification N6-succinyllysine. D254 contacts substrate. D254 contacts Mn(2+). ADP is bound by residues N312, T313, and N324.

This sequence belongs to the isocitrate and isopropylmalate dehydrogenases family. In terms of assembly, heterooligomer of subunits alpha (IDH3A), beta (IDH3B), and gamma (IDH3G) in the apparent ratio of 2:1:1. The heterodimer containing one IDH3A and one IDH3B subunit and the heterodimer containing one IDH3A and one IDH3G subunit assemble into a heterotetramer (which contains two subunits of IDH3A, one of IDH3B and one of IDH3G) and further into the heterooctamer. Mg(2+) is required as a cofactor. Requires Mn(2+) as cofactor.

Its subcellular location is the mitochondrion. The heterotetramer and the heterodimer composed of IDH3A and IDH3G subunits can be allosterically activated by citrate (CIT) or/and ADP, and the two activators can act independently or synergistically. The heterodimer composed of IDH3A and IDH3B subunits cannot be allosterically regulated and the allosteric regulation of the heterotetramer is through the IDH3G subunit and not the IDH3B subunit. The IDH3G subunit contains the allosteric site which consists of a CIT-binding site and an ADP-binding site, and the binding of CIT and ADP causes conformational changes at the allosteric site which are transmitted to the active site in the catalytic subunit (IDH3A) through a cascade of conformational changes at the heterodimer interface, leading to stabilization of the isocitrate-binding at the active site and thus activation of the enzyme. ATP can activate the heterotetramer and the heterodimer composed of IDH3A and IDH3G subunits at low concentrations but inhibits their activities at high concentrations, whereas ATP exhibits only inhibitory effect on the heterodimer composed of IDH3A and IDH3B subunits. Its function is as follows. Regulatory subunit which plays a role in the allosteric regulation of the enzyme catalyzing the decarboxylation of isocitrate (ICT) into alpha-ketoglutarate. The heterodimer composed of the alpha (IDH3A) and beta (IDH3B) subunits and the heterodimer composed of the alpha (IDH3A) and gamma (IDH3G) subunits, have considerable basal activity but the full activity of the heterotetramer (containing two subunits of IDH3A, one of IDH3B and one of IDH3G) requires the assembly and cooperative function of both heterodimers. The polypeptide is Isocitrate dehydrogenase [NAD] subunit gamma 1, mitochondrial (Idh3g) (Rattus norvegicus (Rat)).